The primary structure comprises 248 residues: Meiotic drive suppressor wtf1 (248 aa).

The interval 30–68 (LLPEYNSDEESTLPPYSDHARVSNPPNTHRENHSSGTTD) is disordered. The next 4 helical transmembrane spans lie at 73 to 93 (FLIK…PAVC), 110 to 130 (WTLI…SWYF), 152 to 172 (IPMA…PRVT), and 186 to 206 (SLAD…VETV).

The protein belongs to the WTF family. In terms of assembly, homomer. Interacts with other proteins that exhibit high sequence similarity.

The protein localises to the spore membrane. It localises to the vacuole membrane. Functionally, acts as a suppressor component of the dual wtf meiotic drive system, and can suppress but not confer meiotic drive by compatible poisons. Wtf meiotic drive systems promote unequal transmission of alleles from the parental zygote to progeny spores by encoding a poison and an antidote from the same locus; the poison is trans-acting and forms toxic aggregates in all spores within an ascus, wherease the antidote is spore-specific and targets aggregates for degradation by the vacuole. Meiotic drive by wtf systems therefore lead to poisoning of all progeny that do not inherit the dual poison/antidote allele, or express a compatible antidote. The protein is Meiotic drive suppressor wtf1 of Schizosaccharomyces pombe (Fission yeast).